The sequence spans 35 residues: Unknown protein 14 from 2D-PAGE (35 aa).

A disordered region spans residues 1-35; sequence VVXXQTLXDXRGIYGDQGSIGPXXIXGLQGDRDAD.

This is Unknown protein 14 from 2D-PAGE from Bombyx mori (Silk moth).